Here is a 185-residue protein sequence, read N- to C-terminus: Ribosome-recycling factor (185 aa).

Residues 142-165 form a disordered region; sequence IVKDGDAGEDEGSRAEKELDGLTK.

The protein belongs to the RRF family.

The protein resides in the cytoplasm. Its function is as follows. Responsible for the release of ribosomes from messenger RNA at the termination of protein biosynthesis. May increase the efficiency of translation by recycling ribosomes from one round of translation to another. The chain is Ribosome-recycling factor from Renibacterium salmoninarum (strain ATCC 33209 / DSM 20767 / JCM 11484 / NBRC 15589 / NCIMB 2235).